A 231-amino-acid polypeptide reads, in one-letter code: Nucleoside diphosphate kinase II, chloroplastic (231 aa).

A chloroplast-targeting transit peptide spans 1–62 (MVGATVVSKW…RNSASRRRLR (62 aa)). ATP is bound by residues lysine 91, phenylalanine 139, arginine 167, threonine 173, arginine 184, and asparagine 194. Histidine 197 serves as the catalytic Pros-phosphohistidine intermediate.

This sequence belongs to the NDK family. In terms of assembly, interacts with PHYA, MPK3 and MPK6. Mg(2+) serves as cofactor. In terms of processing, autophosphorylated.

The protein resides in the plastid. It localises to the chloroplast. It catalyses the reaction a 2'-deoxyribonucleoside 5'-diphosphate + ATP = a 2'-deoxyribonucleoside 5'-triphosphate + ADP. It carries out the reaction a ribonucleoside 5'-diphosphate + ATP = a ribonucleoside 5'-triphosphate + ADP. Major role in the synthesis of nucleoside triphosphates other than ATP. The ATP gamma phosphate is transferred to the NDP beta phosphate via a ping-pong mechanism, using a phosphorylated active-site intermediate. May activate MPK3 and MPK6. May be involved in the regulation of cellular redox state and hydrogen peroxide-mediated MAP kinase signaling. In Arabidopsis thaliana (Mouse-ear cress), this protein is Nucleoside diphosphate kinase II, chloroplastic (NDPK2).